The primary structure comprises 218 residues: Capsid protein (218 aa).

The residue at position 1 (M1) is an N-acetylmethionine; by host. Residues 1 to 10 show a composition bias toward low complexity; sequence MDKSESTSAG. Positions 1–29 are disordered; that stretch reads MDKSESTSAGRNRRRRPRRGSRSASSSAD. A compositionally biased stretch (basic residues) spans 11–21; the sequence is RNRRRRPRRGS.

It belongs to the cucumovirus capsid protein family.

It localises to the virion. Capsid protein. Probably binds RNA and plays a role in packaging. The sequence is that of Capsid protein from Cucumis sativus (Cucumber).